The primary structure comprises 226 residues: Cytidylate kinase (226 aa).

10 to 18 (GPASSGKST) is a binding site for ATP.

Belongs to the cytidylate kinase family. Type 1 subfamily.

It is found in the cytoplasm. It catalyses the reaction CMP + ATP = CDP + ADP. The enzyme catalyses dCMP + ATP = dCDP + ADP. This Streptococcus thermophilus (strain CNRZ 1066) protein is Cytidylate kinase.